Reading from the N-terminus, the 346-residue chain is MRALGAVVTLLLWGQLFAVDLSNDAMDTADDSCPKPPEIENGYVEHLVRYRCQHYRLRTEGDGVYTLNSEKQWVNTAAGERLPECEAVCGKPKHPVDQVQRIIGGSLDAKGSFPWQAKMVSRHELITGATLISDQWLLTTAKNLFLNHSEDATSKDIAPTLKLYVGKMQPVEIEKVVIHPNRSVVDIGVIKLRQKVPVNERVMPICLPSKDYIAPGRMGYVSGWGRNANFRFTDRLKYVMLPVADQDSCMLHYEGSTVPEKEGSKSSVGVQPILNEHTFCAGMTKYQEDTCYGDAGSAFAIHDLEQDTWYAAGILSFDKSCSVAEYGVYVKVNSFLDWIQETMAKN.

Residues 1 to 18 (MRALGAVVTLLLWGQLFA) form the signal peptide. The region spanning 31 to 87 (DSCPKPPEIENGYVEHLVRYRCQHYRLRTEGDGVYTLNSEKQWVNTAAGERLPECEA) is the Sushi domain. 4 cysteine pairs are disulfide-bonded: cysteine 52–cysteine 85, cysteine 89–cysteine 206, cysteine 249–cysteine 280, and cysteine 291–cysteine 321. The 243-residue stretch at 102–344 (IIGGSLDAKG…FLDWIQETMA (243 aa)) folds into the Peptidase S1 domain. 2 N-linked (GlcNAc...) asparagine glycosylation sites follow: asparagine 147 and asparagine 181. Residues 258 to 263 (VPEKEG) form an interaction with CD163 region.

The protein belongs to the peptidase S1 family. Tetramer of two alpha and two beta chains; disulfide-linked. The hemoglobin/haptoglobin complex is composed of a haptoglobin dimer bound to two hemoglobin alpha-beta dimers. Interacts with CD163. Interacts with ERGIC3. Expressed by the liver and secreted in plasma.

It is found in the secreted. Functionally, as a result of hemolysis, hemoglobin is found to accumulate in the kidney and is secreted in the urine. Haptoglobin captures, and combines with free plasma hemoglobin to allow hepatic recycling of heme iron and to prevent kidney damage. Haptoglobin also acts as an antioxidant, has antibacterial activity and plays a role in modulating many aspects of the acute phase response. Hemoglobin/haptoglobin complexes are rapidly cleared by the macrophage CD163 scavenger receptor expressed on the surface of liver Kupfer cells through an endocytic lysosomal degradation pathway. In Mesocricetus auratus (Golden hamster), this protein is Haptoglobin (HP).